Here is a 187-residue protein sequence, read N- to C-terminus: PRA1 family protein G1 (187 aa).

3 helical membrane-spanning segments follow: residues 84–104 (LFLIGDPMALVTVASFVAMWL), 125–145 (VIVFGLILGSLWALWFINSLQ), and 146–166 (CLILGVVTSVLLCLVHAIIRN).

This sequence belongs to the PRA1 family. As to expression, expressed in roots and lateral roots.

Its subcellular location is the endosome membrane. Functionally, may be involved in both secretory and endocytic intracellular trafficking in the endosomal/prevacuolar compartments. This is PRA1 family protein G1 (PRA1G1) from Arabidopsis thaliana (Mouse-ear cress).